Consider the following 200-residue polypeptide: LexA repressor (200 aa).

The segment at residues 27-47 (VREICNAVELRSTSTVHGHLK) is a DNA-binding region (H-T-H motif). Catalysis depends on for autocatalytic cleavage activity residues Ser124 and Lys161.

The protein belongs to the peptidase S24 family. In terms of assembly, homodimer.

It carries out the reaction Hydrolysis of Ala-|-Gly bond in repressor LexA.. Its function is as follows. Represses a number of genes involved in the response to DNA damage (SOS response), including recA and lexA. In the presence of single-stranded DNA, RecA interacts with LexA causing an autocatalytic cleavage which disrupts the DNA-binding part of LexA, leading to derepression of the SOS regulon and eventually DNA repair. The polypeptide is LexA repressor (Clostridium tetani (strain Massachusetts / E88)).